We begin with the raw amino-acid sequence, 359 residues long: Peptide chain release factor 1 (359 aa).

Residue Gln-235 is modified to N5-methylglutamine. Residues Lys-284–Phe-311 are disordered.

Belongs to the prokaryotic/mitochondrial release factor family. Methylated by PrmC. Methylation increases the termination efficiency of RF1.

Its subcellular location is the cytoplasm. Peptide chain release factor 1 directs the termination of translation in response to the peptide chain termination codons UAG and UAA. This Bartonella quintana (strain Toulouse) (Rochalimaea quintana) protein is Peptide chain release factor 1.